Reading from the N-terminus, the 29-residue chain is Cycloviolacin-O21 (29 aa).

Residues 1–29 constitute a cross-link (cyclopeptide (Gly-Asn)); sequence GLPVCGETCVTGSCYTPGCTCSWPVCTRN. Cystine bridges form between C5–C19, C9–C21, and C14–C26.

Post-translationally, this is a cyclic peptide. In terms of tissue distribution, expressed in leaves, petals, petioles, and runners but not in roots (at protein level).

Functionally, probably participates in a plant defense mechanism. This Viola odorata (Sweet violet) protein is Cycloviolacin-O21.